A 430-amino-acid chain; its full sequence is uncharacterized protein (430 aa).

The first 19 residues, 1–19 (MKILLFVVLFFNVLVGIYS), serve as a signal peptide directing secretion. Asn39 carries N-linked (GlcNAc...) asparagine glycosylation. The tract at residues 119–408 (LDPNSSPSPS…ELLEKNSDGN (290 aa)) is disordered. A compositionally biased stretch (pro residues) spans 124–168 (SPSPSPSPSPSPSPSPSPSPSPSPSPSPSPSPSPSPSPSPSPSPS). Composition is skewed to low complexity over residues 169 to 253 (PSSS…TPSQ) and 263 to 285 (PTPTQTPSQTPTQTQTPTPTQTP). Over residues 286-303 (ISSRPMSISTEKPSSSEE) the composition is skewed to polar residues. Residue Asn312 is glycosylated (N-linked (GlcNAc...) asparagine). Positions 316–325 (SEDKKKDSES) are enriched in basic and acidic residues. Residues 326–370 (KSSQSESPSPSASASESESASESASASTSVSVSASPLPIMDSSSS) show a composition bias toward low complexity. An N-linked (GlcNAc...) asparagine glycan is attached at Asn408.

It localises to the secreted. This is an uncharacterized protein from Dictyostelium discoideum (Social amoeba).